Here is a 338-residue protein sequence, read N- to C-terminus: Popeye domain-containing protein 1 (338 aa).

Topologically, residues 1 to 40 are extracellular; the sequence is MATESILITTLPMDLNSQINNVTFGLNENETLCENWREIH. Asn21 and Asn29 each carry an N-linked (GlcNAc...) asparagine glycan. The chain crosses the membrane as a helical span at residues 41-61; sequence HLVFHLANTCFAAGLVIPSTL. Topologically, residues 62–65 are cytoplasmic; the sequence is NLHM. Residues 66–86 form a helical membrane-spanning segment; that stretch reads ILLRGMLCLGCIFFIIWAILF. At 87-91 the chain is on the extracellular side; sequence RCALD. Residues 92 to 112 form a helical membrane-spanning segment; the sequence is IMIWNATFLSMNFMHFIYLVY. The Cytoplasmic portion of the chain corresponds to 113–338; that stretch reads KKRPIKIEKD…VGPLSHAVFC (226 aa).

Belongs to the popeye family.

The protein resides in the lateral cell membrane. The protein localises to the cell junction. Its subcellular location is the tight junction. It localises to the membrane. It is found in the cell membrane. The protein resides in the sarcolemma. The protein localises to the caveola. In terms of biological role, cell adhesion molecule involved in the establishment and/or maintenance of cell integrity. May play a role in vamp3-mediated vesicular transport and recycling of different receptor molecules. May be involved in the formation and regulation of the tight junction (TJ) paracellular permeability barrier in epithelial cells. May induce primordial adhesive contact and aggregation of epithelial cells in a Ca(2+)-independent manner. May be involved in epithelial movement during corneal sheet formation and regeneration. May play a role in the regulation of cell shape and movement by modulating the Rho-GTPase activity. May be involved in skeletal muscle and heart development as well as in the maintenance of heart function. May also be involved in striated muscle regeneration and in the regulation of cell spreading. This is Popeye domain-containing protein 1 (popdc1) from Xenopus tropicalis (Western clawed frog).